The primary structure comprises 251 residues: Large ribosomal subunit protein uL16m (251 aa).

The transit peptide at 1-29 (MWRLLARASAPLLRVPLSDSWALLPASAG) directs the protein to the mitochondrion.

This sequence belongs to the universal ribosomal protein uL16 family. Component of the mitochondrial large ribosomal subunit (mt-LSU). Mature mammalian 55S mitochondrial ribosomes consist of a small (28S) and a large (39S) subunit. The 28S small subunit contains a 12S ribosomal RNA (12S mt-rRNA) and 30 different proteins. The 39S large subunit contains a 16S rRNA (16S mt-rRNA), a copy of mitochondrial valine transfer RNA (mt-tRNA(Val)), which plays an integral structural role, and 52 different proteins.

The protein localises to the mitochondrion. The chain is Large ribosomal subunit protein uL16m (MRPL16) from Homo sapiens (Human).